Consider the following 308-residue polypeptide: Homoserine kinase (308 aa).

95-105 contacts ATP; it reads PQSRGLGSSAA.

The protein belongs to the GHMP kinase family. Homoserine kinase subfamily.

Its subcellular location is the cytoplasm. It catalyses the reaction L-homoserine + ATP = O-phospho-L-homoserine + ADP + H(+). It participates in amino-acid biosynthesis; L-threonine biosynthesis; L-threonine from L-aspartate: step 4/5. Its function is as follows. Catalyzes the ATP-dependent phosphorylation of L-homoserine to L-homoserine phosphate. This Corynebacterium jeikeium (strain K411) protein is Homoserine kinase.